The sequence spans 1097 residues: MATQVMGQSSGGGGLFTSSGNIGMALPNDMYDLHDLSKAELAAPQLIMLANVALTGEVNGSCCDYLVGEERQMAELMPVGDNNFSDSEEGEGLEESADIKGEPHGLENMELRSLELSVVEPQPVFEASGAPDIYSSNKDLPPETPGAEDKGKSSKTKPFRCKPCQYEAESEEQFVHHIRVHSAKKFFVEESAEKQAKARESGSSTAEEGDFSKGPIRCDRCGYNTNRYDHYTAHLKHHTRAGDNERVYKCIICTYTTVSEYHWRKHLRNHFPRKVYTCGKCNYFSDRKNNYVQHVRTHTGERPYKCELCPYSSSQKTHLTRHMRTHSGEKPFKCDQCSYVASNQHEVTRHARQVHNGPKPLNCPHCDYKTADRSNFKKHVELHVNPRQFNCPVCDYAASKKCNLQYHFKSKHPTCPNKTMDVSKVKLKKTKKREADLPDNITNEKTEIEQTKIKGDVAGKKNEKSVKAEKRDVSKEKKPSNNVSVIQVTTRTRKSVTEVKEMDVHTGSNSEKFSKTKKSKRKLEVDSHSLHGPVNDEESSTKKKKKVESKSKNNSQEVPKGDSKVEENKKQNTCMKKSTKKKTLKNKSSKKSSKPPQKEPVEKGSAQMDPPQMGPAPTEAVQKGPVQVEPPPPMEHAQMEGAQIRPAPDEPVQMEVVQEGPAQKELLPPVEPAQMVGAQIVLAHMELPPPMETAQTEVAQMGPAPMEPAQMEVAQVESAPMQVVQKEPVQMELSPPMEVVQKEPVQIELSPPMEVVQKEPVKIELSPPIEVVQKEPVQMELSPPMGVVQKEPAQREPPPPREPPLHMEPISKKPPLRKDKKEKSNMQSERARKEQVLIEVGLVPVKDSWLLKESVSTEDLSPPSPPLPKENLREEASGDQKLLNTGEGNKEAPLQKVGAEEADESLPGLAANINESTHISSSGQNLNTPEGETLNGKHQTDSIVCEMKMDTDQNTRENLTGINSTVEEPVSPMLPPSAVEEREAVSKTALASPPATMAANESQEIDEDEGIHSHEGSDLSDNMSEGSDDSGLHGARPVPQESSRKNAKEALAVKAAKGDFVCIFCDRSFRKGKDYSKHLNRHLVNVYYLEEAAQGQE.

Residues 32-122 (DLHDLSKAEL…SLELSVVEPQ (91 aa)) are interaction with SIN3A. Positions 43-57 (APQLIMLANVALTGE) are interaction with SIN3B. Disordered stretches follow at residues 83–103 (NFSDSEEGEGLEESADIKGEP) and 127–159 (ASGAPDIYSSNKDLPPETPGAEDKGKSSKTKPF). Residues 86–96 (DSEEGEGLEES) are compositionally biased toward acidic residues. Positions 145–418 (PGAEDKGKSS…KSKHPTCPNK (274 aa)) are interaction with ZFP90. Residues 159–181 (FRCKPCQYEAESEEQFVHHIRVH) form a C2H2-type 1 zinc finger. The tract at residues 201–212 (SGSSTAEEGDFS) is required for binding to the neuron-restrictive silencer element. 7 C2H2-type zinc fingers span residues 216-238 (IRCDRCGYNTNRYDHYTAHLKHH), 248-270 (YKCIICTYTTVSEYHWRKHLRNH), 276-298 (YTCGKCNYFSDRKNNYVQHVRTH), 304-326 (YKCELCPYSSSQKTHLTRHMRTH), 332-355 (FKCDQCSYVASNQHEVTRHARQVH), 361-383 (LNCPHCDYKTADRSNFKKHVELH), and 389-412 (FNCPVCDYAASKKCNLQYHFKSKH). Residues 452 to 479 (KIKGDVAGKKNEKSVKAEKRDVSKEKKP) are compositionally biased toward basic and acidic residues. Disordered stretches follow at residues 452–642 (KIKG…MEGA), 774–837 (KEPV…EQVL), 853–938 (ESVS…NGKH), and 961–1049 (GINS…NAKE). The segment covering 480–490 (SNNVSVIQVTT) has biased composition (polar residues). Basic and acidic residues-rich tracts occupy residues 495 to 504 (SVTEVKEMDV) and 559 to 570 (PKGDSKVEENKK). The span at 577–593 (KSTKKKTLKNKSSKKSS) shows a compositional bias: basic residues. Positions 803–836 (PPLHMEPISKKPPLRKDKKEKSNMQSERARKEQV) are enriched in basic and acidic residues. Residue S864 is modified to Phosphoserine. Residues 913–930 (INESTHISSSGQNLNTPE) are compositionally biased toward polar residues. Phosphoserine is present on S971. The interval 1009–1087 (EGIHSHEGSD…HLNRHLVNVY (79 aa)) is interaction with RCOR1. Residues 1060 to 1082 (FVCIFCDRSFRKGKDYSKHLNRH) form a C2H2-type 9 zinc finger.

Isoform 1 and isoform 3 form heterodimers. Isoform 3: Forms homodimers and homooligomers; binds to the neuron-restrictive silencer element (NRSE) as monomer. Interacts with SIN3A, SIN3B and RCOR1. Interacts with CDYL. Interacts with EHMT1 and EHMT2 only in the presence of CDYL. Part of a complex containing at least CDYL, REST, WIZ, SETB1, EHMT1 and EHMT2. Interacts (via zinc-finger DNA-binding domain) with ZFP90 (via N- and C-termini); the interaction inhibits REST repressor activity. Interacts (via C2H2-type zinc finger 5) with PRICKLE1. Interacts with FBXW11 and BTRC. Interacts with USP7. Post-translationally, O-glycosylated. Phosphorylated; phosphorylation is required for ubiquitination. In terms of processing, ubiquitinated; ubiquitination is mediated by BTRC and leads to proteasomal degradation in G2 phase. Ubiquitination increases during neuronal differentiation. Deubiquitinated by USP7; leading to its stabilization and promoting the maintenance of neural progenitor cells. In terms of tissue distribution, expressed in neurons of the prefrontal cortex, in hippocampal pyramidal neurons, dentate gyrus granule neurons and cerebellar Purkinje and granule neurons (at protein level). Expressed in dopaminergic neurons of the substantia nigra (at protein level). Expressed in neural progenitor cells (at protein level). In patients suffering from Alzheimer disease, frontotemporal dementia or dementia with Lewy bodies, decreased nuclear levels have been observed in neurons of the prefrontal cortex and the hippocampus, but not in neurons of the dentate gyrus and cerebellum (at protein level). In patients with Parkinson disease or dementia with Lewy bodies, decreased nuclear levels have been observed in dopaminergic neurons and in cortical neurons and localization to Lewy bodies and pale bodies was detected (at protein level). Expressed at higher levels in weakly invasive breast cancer cell lines and at lower levels in highly invasive breast cancer lines (at protein level). Ubiquitous. Expressed at higher levels in the tissues of the lymphocytic compartment, including spleen, thymus, peripheral blood lymphocytes and ovary.

The protein localises to the nucleus. It is found in the cytoplasm. Transcriptional repressor which binds neuron-restrictive silencer element (NRSE) and represses neuronal gene transcription in non-neuronal cells. Restricts the expression of neuronal genes by associating with two distinct corepressors, SIN3A and RCOR1, which in turn recruit histone deacetylase to the promoters of REST-regulated genes. Mediates repression by recruiting the BHC complex at RE1/NRSE sites which acts by deacetylating and demethylating specific sites on histones, thereby acting as a chromatin modifier. Transcriptional repression by REST-CDYL via the recruitment of histone methyltransferase EHMT2 may be important in transformation suppression. Represses the expression of SRRM4 in non-neural cells to prevent the activation of neural-specific splicing events and to prevent production of REST isoform 3. Repressor activity may be inhibited by forming heterodimers with isoform 3, thereby preventing binding to NRSE or binding to corepressors and leading to derepression of target genes. Also maintains repression of neuronal genes in neural stem cells, and allows transcription and differentiation into neurons by dissociation from RE1/NRSE sites of target genes. Thereby is involved in maintaining the quiescent state of adult neural stem cells and preventing premature differentiation into mature neurons. Plays a role in the developmental switch in synaptic NMDA receptor composition during postnatal development, by repressing GRIN2B expression and thereby altering NMDA receptor properties from containing primarily GRIN2B to primarily GRIN2A subunits. Acts as a regulator of osteoblast differentiation. Key repressor of gene expression in hypoxia; represses genes in hypoxia by direct binding to an RE1/NRSE site on their promoter regions. May also function in stress resistance in the brain during aging; possibly by regulating expression of genes involved in cell death and in the stress response. Repressor of gene expression in the hippocampus after ischemia by directly binding to RE1/NRSE sites and recruiting SIN3A and RCOR1 to promoters of target genes, thereby promoting changes in chromatin modifications and ischemia-induced cell death. After ischemia, might play a role in repression of miR-132 expression in hippocampal neurons, thereby leading to neuronal cell death. Negatively regulates the expression of SRRM3 in breast cancer cell lines. Its function is as follows. Binds to the 3' region of the neuron-restrictive silencer element (NRSE), with lower affinity than full-length REST isoform 1. Exhibits weaker repressor activity compared to isoform 1. May negatively regulate the repressor activity of isoform 1 by binding to isoform 1, thereby preventing its binding to NRSE and leading to derepression of target genes. However, in another study, does not appear to be implicated in repressor activity of a NRSE motif-containing reporter construct nor in inhibitory activity on the isoform 1 transcriptional repressor activity. Post-transcriptional inactivation of REST by SRRM4-dependent alternative splicing into isoform 3 is required in mechanosensory hair cells in the inner ear for derepression of neuronal genes and hearing. The polypeptide is RE1-silencing transcription factor (REST) (Homo sapiens (Human)).